A 478-amino-acid chain; its full sequence is H(+)/Cl(-) exchange transporter ClcA (478 aa).

The Cytoplasmic portion of the chain corresponds to 1 to 32; it reads MTHSTQQLSPEGVAEGKRGRLIRELVNRDKTP. Residues 33–69 form a helical membrane-spanning segment; that stretch reads LIILIMAAVVGVVTGLLGVAFDRGVDWVQQQRLLALA. Over 70-76 the chain is Periplasmic; that stretch reads NVADSAL. The chain crosses the membrane as a helical span at residues 77 to 100; that stretch reads LVWPLAFIMSALLAMMGYFLVSRF. A Selectivity filter part_1 motif is present at residues 106–110; that stretch reads GSGIP. A chloride-binding site is contributed by Ser-107. Residues 109–116 constitute an intramembrane region (helical); it reads IPEIEGAM. At 117-123 the chain is on the cytoplasmic side; it reads EEMRPVR. The next 2 helical transmembrane spans lie at 124–141 and 148–166; these read WWRV…TLGA and EGPM…VDIF. The short motif at 146-150 is the Selectivity filter part_2 element; sequence GREGP. Topologically, residues 167–176 are cytoplasmic; that stretch reads RLRSPEARHS. 2 intramembrane regions (helical) span residues 177 to 189 and 193 to 201; these read LLAT…LSAA and PLAGILFVI. Residues 202 to 214 lie on the Cytoplasmic side of the membrane; it reads EEMRSQFRYSLVS. The helical transmembrane segment at 215-232 threads the bilayer; the sequence is IKAVFIGVITSTIVYRYF. Topologically, residues 233–252 are periplasmic; it reads NGERAIIEVGKLSDAPLNTL. A helical membrane pass occupies residues 253–281; it reads WLYLLLGIIFGAVGVIFNALIFRTQDMFV. Over 282-287 the chain is Cytoplasmic; it reads RFHGGD. A helical membrane pass occupies residues 288–309; that stretch reads WRKLVLIGGLLGGMCGLLALLH. The Periplasmic portion of the chain corresponds to 310–329; sequence GNAVGGGFALIPIAAAGNFS. Helical transmembrane passes span 330-349 and 355-376; these read IGML…LCFG and GIFA…LSCA. The Selectivity filter part_3 signature appears at 355 to 359; that stretch reads GIFAP. 2 residues coordinate chloride: Ile-356 and Phe-357. Residues 377–386 are Periplasmic-facing; that stretch reads HFFPQYGIEA. The helical intramembrane region spans 387 to 401; the sequence is GTFAIAGMGALFAAS. Residues 402 to 404 constitute an intramembrane region (note=Loop between two helices); it reads VRA. The segment at residues 405–416 is an intramembrane region (helical); it reads PLTGIVLVLEMT. The note=Loop between two helices intramembrane region spans 417–421; the sequence is DNYQL. A helical transmembrane segment spans residues 422–438; it reads ILPMIVTCLGATLIAQF. The Cytoplasmic portion of the chain corresponds to 439–478; it reads MGGKPLYSAILARTLAKQEQARATVIAQEPAVENTPQTGR. Tyr-445 is a binding site for chloride.

The protein belongs to the chloride channel (TC 2.A.49) family. ClcA subfamily. As to quaternary structure, homodimer.

The protein resides in the cell inner membrane. The catalysed reaction is 2 chloride(in) + H(+)(out) = 2 chloride(out) + H(+)(in). Functionally, proton-coupled chloride transporter. Functions as antiport system and exchanges two chloride ions for 1 proton. Probably acts as an electrical shunt for an outwardly-directed proton pump that is linked to amino acid decarboxylation, as part of the extreme acid resistance (XAR) response. This chain is H(+)/Cl(-) exchange transporter ClcA, found in Yersinia pseudotuberculosis serotype IB (strain PB1/+).